A 168-amino-acid chain; its full sequence is Crossover junction endodeoxyribonuclease RuvC (168 aa).

Residues Asp8, Glu68, and Asp140 contribute to the active site. Mg(2+)-binding residues include Asp8, Glu68, and Asp140.

It belongs to the RuvC family. As to quaternary structure, homodimer which binds Holliday junction (HJ) DNA. The HJ becomes 2-fold symmetrical on binding to RuvC with unstacked arms; it has a different conformation from HJ DNA in complex with RuvA. In the full resolvosome a probable DNA-RuvA(4)-RuvB(12)-RuvC(2) complex forms which resolves the HJ. The cofactor is Mg(2+).

The protein resides in the cytoplasm. It catalyses the reaction Endonucleolytic cleavage at a junction such as a reciprocal single-stranded crossover between two homologous DNA duplexes (Holliday junction).. The RuvA-RuvB-RuvC complex processes Holliday junction (HJ) DNA during genetic recombination and DNA repair. Endonuclease that resolves HJ intermediates. Cleaves cruciform DNA by making single-stranded nicks across the HJ at symmetrical positions within the homologous arms, yielding a 5'-phosphate and a 3'-hydroxyl group; requires a central core of homology in the junction. The consensus cleavage sequence is 5'-(A/T)TT(C/G)-3'. Cleavage occurs on the 3'-side of the TT dinucleotide at the point of strand exchange. HJ branch migration catalyzed by RuvA-RuvB allows RuvC to scan DNA until it finds its consensus sequence, where it cleaves and resolves the cruciform DNA. The chain is Crossover junction endodeoxyribonuclease RuvC from Gluconacetobacter diazotrophicus (strain ATCC 49037 / DSM 5601 / CCUG 37298 / CIP 103539 / LMG 7603 / PAl5).